Reading from the N-terminus, the 360-residue chain is Peptide chain release factor 1 (360 aa).

Q237 is modified (N5-methylglutamine).

Belongs to the prokaryotic/mitochondrial release factor family. In terms of processing, methylated by PrmC. Methylation increases the termination efficiency of RF1.

It localises to the cytoplasm. In terms of biological role, peptide chain release factor 1 directs the termination of translation in response to the peptide chain termination codons UAG and UAA. This chain is Peptide chain release factor 1, found in Pseudomonas syringae pv. syringae (strain B728a).